A 283-amino-acid chain; its full sequence is Protoheme IX farnesyltransferase (283 aa).

The next 7 membrane-spanning stretches (helical) occupy residues 13–33, 35–55, 90–110, 156–176, 208–228, 230–250, and 262–282; these read ISSV…PTGL, GGTL…VGTL, ILLV…LTAV, LGAG…PHFL, MIGF…TEAA, WIYG…TIVF, and VLKA…VDWF.

Belongs to the UbiA prenyltransferase family. Protoheme IX farnesyltransferase subfamily.

Its subcellular location is the cell inner membrane. It carries out the reaction heme b + (2E,6E)-farnesyl diphosphate + H2O = Fe(II)-heme o + diphosphate. The protein operates within porphyrin-containing compound metabolism; heme O biosynthesis; heme O from protoheme: step 1/1. In terms of biological role, converts heme B (protoheme IX) to heme O by substitution of the vinyl group on carbon 2 of heme B porphyrin ring with a hydroxyethyl farnesyl side group. This Salinibacter ruber (strain DSM 13855 / M31) protein is Protoheme IX farnesyltransferase.